The sequence spans 146 residues: Vascular endothelial growth factor A (146 aa).

A signal peptide spans 1 to 26 (MNFLLSWVHWSLALLLYLHHAKWSQA). Intrachain disulfides connect Cys51-Cys93, Cys82-Cys127, and Cys86-Cys129. Residue Asn100 is glycosylated (N-linked (GlcNAc...) asparagine).

It belongs to the PDGF/VEGF growth factor family. As to quaternary structure, homodimer; disulfide-linked. Also found as heterodimer with PGF. Interacts with NRP1. Interacts with isoform 2 of BSG. Interacts with CD82; this interaction inhibits VEGFA-mediated signaling pathway.

Functionally, growth factor active in angiogenesis, vasculogenesis and endothelial cell growth. Induces endothelial cell proliferation, promotes cell migration, inhibits apoptosis and induces permeabilization of blood vessels. Binds to the FLT1/VEGFR1 and KDR/VEGFR2 receptors, heparan sulfate and heparin. Binding to NRP1 receptor initiates a signaling pathway needed for motor neuron axon guidance and cell body migration, including for the caudal migration of facial motor neurons from rhombomere 4 to rhombomere 6 during embryonic development. Also binds the DEAR/FBXW7-AS1 receptor. This Ovis aries (Sheep) protein is Vascular endothelial growth factor A (VEGFA).